We begin with the raw amino-acid sequence, 338 residues long: MAGSHPYFNLPDSTHPSPPSAPPSLRWCQRCQPSDATNGLLVALLGGGLPAGFVGPLSRMAYQASNLPSLELLICRCLFHLPIALPLKLHGDPLLGPPDIRGRACFCALLNVLSIGCAYSAVQVVPAGNAATVRKGSSTVCSAILTLCLESQGLSGYDWCGLLGSILGLIIIVGPGLWTLQEGTMGVYTALGYVQAFLGGLALSLGLLVYRSLHFPSCLPTVAFLSGLVGLLGSVPGLFVLQTPVLPSDLLSWSCVGAVGILALVSFTCVGYAVTKAHPALVCAVLHSEVVVALILQYYVLHETVAPSDIMGAGIVLGSIAIITARNLSCERTGKVEE.

Positions 1–21 are disordered; that stretch reads MAGSHPYFNLPDSTHPSPPSA. Transmembrane regions (helical) follow at residues 37–57, 67–87, 105–125, 160–180, 190–210, 221–241, 250–270, 281–301, and 305–325; these read TNGL…VGPL, LPSL…ALPL, CFCA…VQVV, CGLL…LWTL, ALGY…LLVY, TVAF…LFVL, LLSW…FTCV, LVCA…YYVL, and VAPS…IITA. The EamA 1 domain occupies 49–174; sequence LPAGFVGPLS…SILGLIIIVG (126 aa). The region spanning 272 to 325 is the EamA 2 domain; sequence YAVTKAHPALVCAVLHSEVVVALILQYYVLHETVAPSDIMGAGIVLGSIAIITA.

This sequence belongs to the SLC35G solute transporter family.

Its subcellular location is the membrane. The polypeptide is Solute carrier family 35 member G5 (SLC35G5) (Pan troglodytes (Chimpanzee)).